A 104-amino-acid polypeptide reads, in one-letter code: Ubiquitin-related modifier 1 homolog (104 aa).

Gly-104 carries the post-translational modification 1-thioglycine. Gly-104 is covalently cross-linked (Glycyl lysine isopeptide (Gly-Lys) (interchain with K-? in acceptor proteins)).

Belongs to the URM1 family. Interacts with cer. Post-translationally, C-terminal thiocarboxylation occurs in 2 steps, it is first acyl-adenylated (-COAMP) via the hesA/moeB/thiF part of the MOCS3 homolog, then thiocarboxylated (-COSH) via the rhodanese domain of the MOCS3 homolog.

The protein resides in the cytoplasm. The protein operates within tRNA modification; 5-methoxycarbonylmethyl-2-thiouridine-tRNA biosynthesis. Its function is as follows. Acts as a sulfur carrier required for 2-thiolation of mcm(5)S(2)U at tRNA wobble positions of cytosolic tRNA(Lys), tRNA(Glu) and tRNA(Gln). Serves as sulfur donor in tRNA 2-thiolation reaction by being thiocarboxylated (-COSH) at its C-terminus by MOCS3. The sulfur is then transferred to tRNA to form 2-thiolation of mcm(5)S(2)U. Also acts as a ubiquitin-like protein (UBL) that is covalently conjugated via an isopeptide bond to lysine residues of target proteins such as Prx2/Jafrac1, Ciao1, Eip71CD and GILT1. The thiocarboxylated form serves as substrate for conjugation and oxidative stress specifically induces the formation of UBL-protein conjugates. This Drosophila grimshawi (Hawaiian fruit fly) protein is Ubiquitin-related modifier 1 homolog.